A 1173-amino-acid chain; its full sequence is Alpha-mannosidase 2 (1173 aa).

The interval 1–21 (MPFSSYIGNSRRSSTGGGTGG) is disordered. The Cytoplasmic segment spans residues 1–50 (MPFSSYIGNSRRSSTGGGTGGWGQSLLPTALSKSKLAINRKPRKRTLVVN). A helical; Signal-anchor transmembrane segment spans residues 51–71 (FIFANFFVIALTVSLLFFLLT). Residues 72 to 1173 (LFHFGVPGPI…AYKLELRPHK (1102 aa)) lie on the Lumenal side of the membrane. An N-linked (GlcNAc...) asparagine glycan is attached at Asn-106. Zn(2+) contacts are provided by His-162 and Asp-164. A glycan (N-linked (GlcNAc...) asparagine) is linked at Asn-262. Asp-276 provides a ligand contact to Zn(2+). The active-site Nucleophile is Asp-276. Asn-467 is a glycosylation site (N-linked (GlcNAc...) asparagine). Position 564 (His-564) interacts with Zn(2+). Asn-675, Asn-772, Asn-782, Asn-991, Asn-1098, and Asn-1108 each carry an N-linked (GlcNAc...) asparagine glycan.

This sequence belongs to the glycosyl hydrolase 38 family. In terms of assembly, homodimer; disulfide-linked. Interacts with GALT1. The cofactor is Zn(2+). Glycosylated.

It is found in the golgi apparatus membrane. It catalyses the reaction N(4)-{beta-D-GlcNAc-(1-&gt;2)-alpha-D-Man-(1-&gt;3)-[alpha-D-Man-(1-&gt;3)-[alpha-D-Man-(1-&gt;6)]-alpha-D-Man-(1-&gt;6)]-beta-D-Man-(1-&gt;4)-beta-D-GlcNAc-(1-&gt;4)-beta-D-GlcNAc}-L-asparaginyl-[protein] + 2 H2O = 2 alpha-D-mannopyranose + an N(4)-{beta-D-GlcNAc-(1-&gt;2)-alpha-D-Man-(1-&gt;3)-[alpha-D-Man-(1-&gt;6)]-beta-D-Man-(1-&gt;4)-beta-D-GlcNAc-(1-&gt;4)-beta-D-GlcNAc}-L-asparaginyl-[protein]. It functions in the pathway protein modification; protein glycosylation. Its activity is regulated as follows. Inhibited by 1 mM Cu(2+) and by the class II alpha-mannosidase inhibitor swainsonine. Functionally, catalyzes the first committed step in the biosynthesis of complex N-glycans. It controls conversion of high mannose to complex N-glycans; the final hydrolytic step in the N-glycan maturation pathway. Converts GlcNAcMan(5)GlcNAc(2) (Man5Gn) into GlcNAcMan(3)GlcNAc(2) (MGn) by sequential removal of two alpha1,6- and alpha1,3-linked mannose residues from the alpha1,6-mannose branch of the substrate. To a lesser extent, also able to cleave beta1,2-xylosylated Man5Gn-glycopeptide (Man5GnX-GP) and pyridylaminated substrates Man5Gn-PA and Man5GnX-PA, but not active toward Man5-glycopeptide. Required for resistance to salt stress. In Arabidopsis thaliana (Mouse-ear cress), this protein is Alpha-mannosidase 2.